The sequence spans 392 residues: Queuine tRNA-ribosyltransferase (392 aa).

Asp93 (proton acceptor) is an active-site residue. Residues 93 to 97 (DSGGY), Asp147, Gln189, and Gly216 each bind substrate. Positions 247–253 (GVGAPED) are RNA binding. The active-site Nucleophile is Asp266. The segment at 271-275 (TRVAR) is RNA binding; important for wobble base 34 recognition. Zn(2+)-binding residues include Cys304, Cys306, Cys309, and His335.

The protein belongs to the queuine tRNA-ribosyltransferase family. As to quaternary structure, homodimer. Within each dimer, one monomer is responsible for RNA recognition and catalysis, while the other monomer binds to the replacement base PreQ1. Zn(2+) is required as a cofactor.

The enzyme catalyses 7-aminomethyl-7-carbaguanine + guanosine(34) in tRNA = 7-aminomethyl-7-carbaguanosine(34) in tRNA + guanine. It functions in the pathway tRNA modification; tRNA-queuosine biosynthesis. Catalyzes the base-exchange of a guanine (G) residue with the queuine precursor 7-aminomethyl-7-deazaguanine (PreQ1) at position 34 (anticodon wobble position) in tRNAs with GU(N) anticodons (tRNA-Asp, -Asn, -His and -Tyr). Catalysis occurs through a double-displacement mechanism. The nucleophile active site attacks the C1' of nucleotide 34 to detach the guanine base from the RNA, forming a covalent enzyme-RNA intermediate. The proton acceptor active site deprotonates the incoming PreQ1, allowing a nucleophilic attack on the C1' of the ribose to form the product. After dissociation, two additional enzymatic reactions on the tRNA convert PreQ1 to queuine (Q), resulting in the hypermodified nucleoside queuosine (7-(((4,5-cis-dihydroxy-2-cyclopenten-1-yl)amino)methyl)-7-deazaguanosine). The chain is Queuine tRNA-ribosyltransferase from Dehalococcoides mccartyi (strain CBDB1).